A 466-amino-acid polypeptide reads, in one-letter code: Asparagine--tRNA ligase (466 aa).

Belongs to the class-II aminoacyl-tRNA synthetase family. As to quaternary structure, homodimer.

It localises to the cytoplasm. It catalyses the reaction tRNA(Asn) + L-asparagine + ATP = L-asparaginyl-tRNA(Asn) + AMP + diphosphate + H(+). In Aliivibrio fischeri (strain ATCC 700601 / ES114) (Vibrio fischeri), this protein is Asparagine--tRNA ligase.